We begin with the raw amino-acid sequence, 592 residues long: Aspartate--tRNA(Asp/Asn) ligase (592 aa).

Glu-175 provides a ligand contact to L-aspartate. Residues Gln-199 to Lys-202 form an aspartate region. Arg-221 is an L-aspartate binding site. Residues Arg-221–Glu-223 and Gln-230 contribute to the ATP site. His-447 provides a ligand contact to L-aspartate. Residue Glu-481 coordinates ATP. Arg-488 provides a ligand contact to L-aspartate. Gly-533–Arg-536 contacts ATP.

Belongs to the class-II aminoacyl-tRNA synthetase family. Type 1 subfamily. In terms of assembly, homodimer.

Its subcellular location is the cytoplasm. The catalysed reaction is tRNA(Asx) + L-aspartate + ATP = L-aspartyl-tRNA(Asx) + AMP + diphosphate. Functionally, aspartyl-tRNA synthetase with relaxed tRNA specificity since it is able to aspartylate not only its cognate tRNA(Asp) but also tRNA(Asn). Reaction proceeds in two steps: L-aspartate is first activated by ATP to form Asp-AMP and then transferred to the acceptor end of tRNA(Asp/Asn). The protein is Aspartate--tRNA(Asp/Asn) ligase of Dictyoglomus turgidum (strain DSM 6724 / Z-1310).